A 252-amino-acid polypeptide reads, in one-letter code: Probable transcriptional regulatory protein A1E_02520 (252 aa).

The protein belongs to the TACO1 family.

The protein localises to the cytoplasm. The sequence is that of Probable transcriptional regulatory protein A1E_02520 from Rickettsia canadensis (strain McKiel).